The chain runs to 370 residues: Dual-specificity RNA methyltransferase RlmN (370 aa).

The Proton acceptor role is filled by glutamate 97. Residues 103-340 (EKSRGTLCIS…CTVRRTRGDD (238 aa)) form the Radical SAM core domain. A disulfide bond links cysteine 110 and cysteine 345. Residues cysteine 117, cysteine 121, and cysteine 124 each coordinate [4Fe-4S] cluster. S-adenosyl-L-methionine-binding positions include 170-171 (GE), serine 202, 224-226 (SLH), and asparagine 302. The active-site S-methylcysteine intermediate is cysteine 345.

It belongs to the radical SAM superfamily. RlmN family. [4Fe-4S] cluster serves as cofactor.

It localises to the cytoplasm. It carries out the reaction adenosine(2503) in 23S rRNA + 2 reduced [2Fe-2S]-[ferredoxin] + 2 S-adenosyl-L-methionine = 2-methyladenosine(2503) in 23S rRNA + 5'-deoxyadenosine + L-methionine + 2 oxidized [2Fe-2S]-[ferredoxin] + S-adenosyl-L-homocysteine. The enzyme catalyses adenosine(37) in tRNA + 2 reduced [2Fe-2S]-[ferredoxin] + 2 S-adenosyl-L-methionine = 2-methyladenosine(37) in tRNA + 5'-deoxyadenosine + L-methionine + 2 oxidized [2Fe-2S]-[ferredoxin] + S-adenosyl-L-homocysteine. In terms of biological role, specifically methylates position 2 of adenine 2503 in 23S rRNA and position 2 of adenine 37 in tRNAs. m2A2503 modification seems to play a crucial role in the proofreading step occurring at the peptidyl transferase center and thus would serve to optimize ribosomal fidelity. The protein is Dual-specificity RNA methyltransferase RlmN of Hydrogenovibrio crunogenus (strain DSM 25203 / XCL-2) (Thiomicrospira crunogena).